Here is a 151-residue protein sequence, read N- to C-terminus: Methylglyoxal synthase (151 aa).

The MGS-like domain maps to Met-1–Thr-151. Residues His-19, Lys-23, Thr-45–Thr-48, and Ser-65–Gly-66 each bind substrate. Asp-71 serves as the catalytic Proton donor/acceptor. His-98 lines the substrate pocket.

This sequence belongs to the methylglyoxal synthase family.

The catalysed reaction is dihydroxyacetone phosphate = methylglyoxal + phosphate. Catalyzes the formation of methylglyoxal from dihydroxyacetone phosphate. The sequence is that of Methylglyoxal synthase from Vibrio cholerae serotype O1 (strain ATCC 39541 / Classical Ogawa 395 / O395).